We begin with the raw amino-acid sequence, 331 residues long: Holliday junction branch migration complex subunit RuvB (331 aa).

Residues 1–182 (MSSDTLHKYE…FGIPLHLEFY (182 aa)) are large ATPase domain (RuvB-L). ATP-binding positions include Leu21, Arg22, Gly63, Lys66, Thr67, Thr68, 129-131 (EDY), Arg172, Tyr182, and Arg219. Position 67 (Thr67) interacts with Mg(2+). The interval 183-254 (SVDELVLVIK…FANSALFRLG (72 aa)) is small ATPAse domain (RuvB-S). A head domain (RuvB-H) region spans residues 257-331 (GAGFDKMDLK…FEYLLSSKYI (75 aa)). Positions 310 and 315 each coordinate DNA.

The protein belongs to the RuvB family. Homohexamer. Forms an RuvA(8)-RuvB(12)-Holliday junction (HJ) complex. HJ DNA is sandwiched between 2 RuvA tetramers; dsDNA enters through RuvA and exits via RuvB. An RuvB hexamer assembles on each DNA strand where it exits the tetramer. Each RuvB hexamer is contacted by two RuvA subunits (via domain III) on 2 adjacent RuvB subunits; this complex drives branch migration. In the full resolvosome a probable DNA-RuvA(4)-RuvB(12)-RuvC(2) complex forms which resolves the HJ.

Its subcellular location is the cytoplasm. The catalysed reaction is ATP + H2O = ADP + phosphate + H(+). Its function is as follows. The RuvA-RuvB-RuvC complex processes Holliday junction (HJ) DNA during genetic recombination and DNA repair, while the RuvA-RuvB complex plays an important role in the rescue of blocked DNA replication forks via replication fork reversal (RFR). RuvA specifically binds to HJ cruciform DNA, conferring on it an open structure. The RuvB hexamer acts as an ATP-dependent pump, pulling dsDNA into and through the RuvAB complex. RuvB forms 2 homohexamers on either side of HJ DNA bound by 1 or 2 RuvA tetramers; 4 subunits per hexamer contact DNA at a time. Coordinated motions by a converter formed by DNA-disengaged RuvB subunits stimulates ATP hydrolysis and nucleotide exchange. Immobilization of the converter enables RuvB to convert the ATP-contained energy into a lever motion, pulling 2 nucleotides of DNA out of the RuvA tetramer per ATP hydrolyzed, thus driving DNA branch migration. The RuvB motors rotate together with the DNA substrate, which together with the progressing nucleotide cycle form the mechanistic basis for DNA recombination by continuous HJ branch migration. Branch migration allows RuvC to scan DNA until it finds its consensus sequence, where it cleaves and resolves cruciform DNA. This Anaplasma marginale (strain St. Maries) protein is Holliday junction branch migration complex subunit RuvB.